Reading from the N-terminus, the 356-residue chain is Alternative oxidase, mitochondrial (356 aa).

A helical transmembrane segment spans residues 152–172 (VIRFIFLETVAGVPGMVGGML). Positions 159, 198, and 201 each coordinate Fe cation. The helical transmembrane segment at 217–237 (LMVLGAQGVFFNGFFISYLIS) threads the bilayer. Residues Glu-249, Glu-304, and His-307 each coordinate Fe cation. The disordered stretch occupies residues 330–356 (YDNPEAPHPTKSAEIVKPTGWERDEVI).

Belongs to the alternative oxidase family. Fe cation is required as a cofactor.

It is found in the mitochondrion inner membrane. Its function is as follows. Catalyzes cyanide-resistant oxygen consumption. May increase respiration when the cytochrome respiratory pathway is restricted, or in response to low temperatures. This Ajellomyces capsulatus (Darling's disease fungus) protein is Alternative oxidase, mitochondrial (AOX1).